The following is a 613-amino-acid chain: Myrcene synthase, chloroplastic (613 aa).

The transit peptide at 1–46 (MQCMAVHQFAPLLSLLNCSRISSDFGRLFTPKTSTKSRSSTCHPIQ) directs the protein to the chloroplast. Residues R324, D361, and D365 each coordinate (2E)-geranyl diphosphate. The Mg(2+) site is built by D361 and D365. The DDXXD motif signature appears at 361-365 (DDIYD). A helical transmembrane segment spans residues 455-475 (IEMAWLSIGGPVILVHAYFCF). Residues R503 and D506 each contribute to the (2E)-geranyl diphosphate site. Mg(2+) contacts are provided by D506, T510, and E514.

This sequence belongs to the terpene synthase family. Tpsb subfamily. Mg(2+) serves as cofactor. Requires Mn(2+) as cofactor. Expressed in trichomes.

Its subcellular location is the plastid. It localises to the chloroplast membrane. It carries out the reaction (2E)-geranyl diphosphate = beta-myrcene + diphosphate. Its pathway is secondary metabolite biosynthesis; terpenoid biosynthesis. Functionally, monoterpene synthase that catalyzes the formation of myrcene. Can use geranyl diphosphate as substrate, but not farnesyl diphosphate or geranylgeranyl diphosphate. This Humulus lupulus (European hop) protein is Myrcene synthase, chloroplastic.